Here is a 437-residue protein sequence, read N- to C-terminus: 3-ketoacyl-CoA thiolase (437 aa).

Cys99 functions as the Acyl-thioester intermediate in the catalytic mechanism. Active-site proton acceptor residues include His392 and Cys422.

Belongs to the thiolase-like superfamily. Thiolase family. In terms of assembly, heterotetramer of two alpha chains (FadJ) and two beta chains (FadI).

The protein localises to the cytoplasm. It carries out the reaction an acyl-CoA + acetyl-CoA = a 3-oxoacyl-CoA + CoA. It participates in lipid metabolism; fatty acid beta-oxidation. Catalyzes the final step of fatty acid oxidation in which acetyl-CoA is released and the CoA ester of a fatty acid two carbons shorter is formed. This chain is 3-ketoacyl-CoA thiolase, found in Erwinia tasmaniensis (strain DSM 17950 / CFBP 7177 / CIP 109463 / NCPPB 4357 / Et1/99).